The primary structure comprises 312 residues: Elongation factor Ts, mitochondrial (312 aa).

It belongs to the EF-Ts family.

It localises to the mitochondrion. In terms of biological role, associates with the EF-Tu.GDP complex and induces the exchange of GDP to GTP. It remains bound to the aminoacyl-tRNA.EF-Tu.GTP complex up to the GTP hydrolysis stage on the ribosome. In Xenopus laevis (African clawed frog), this protein is Elongation factor Ts, mitochondrial (tsfm).